We begin with the raw amino-acid sequence, 223 residues long: Cytotoxic T-lymphocyte protein 4 (223 aa).

Residues 1–35 (MACLGFQRHKAQLNLATRTWPCTLLFFLLFIPVFC) form the signal peptide. Over 36 to 161 (KAMHVAQPAV…IDPEPCPDSD (126 aa)) the chain is Extracellular. The Ig-like V-type domain maps to 39 to 140 (HVAQPAVVLA…VELMYPPPYY (102 aa)). Residues 46-50 (VLASS) are homodimerization. Disulfide bonds link C58-C129 and C85-C103. N113 is a glycosylation site (N-linked (GlcNAc...) asparagine). Positions 134–139 (MYPPPY) are important for interaction with CD80 and CD86. An N-linked (GlcNAc...) asparagine glycan is attached at N145. Residues 150–155 (YVIDPE) form a homodimerization region. Residues 162–182 (FLLWILAAVSSGLFFYSFLLT) traverse the membrane as a helical segment. Residues 183–223 (AVSLSKMLKKRSPLTTGVYVKMPPTEPECEKQFQPYFIPIN) are Cytoplasmic-facing. Y201 is subject to Phosphotyrosine; by TXK and JAK2.

Homodimer; disulfide-linked. Binds to CD80/B7-1 and CD86/B7.2. Interacts with ICOSLG. In terms of processing, N-glycosylation is important for dimerization. Post-translationally, phosphorylation at Tyr-201 prevents binding to the AP-2 adapter complex, blocks endocytosis, and leads to retention of CTLA4 on the cell surface. In terms of tissue distribution, widely expressed with highest levels in lymphoid tissues. Detected in activated T-cells where expression levels are 30- to 50-fold less than CD28, the stimulatory coreceptor, on the cell surface following activation.

It is found in the cell membrane. Inhibitory receptor acting as a major negative regulator of T-cell responses. The affinity of CTLA4 for its natural B7 family ligands, CD80 and CD86, is considerably stronger than the affinity of their cognate stimulatory coreceptor CD28. The sequence is that of Cytotoxic T-lymphocyte protein 4 (CTLA4) from Homo sapiens (Human).